We begin with the raw amino-acid sequence, 248 residues long: Putative TrmH family tRNA/rRNA methyltransferase (248 aa).

S-adenosyl-L-methionine contacts are provided by glycine 196, isoleucine 216, and leucine 225.

The protein belongs to the class IV-like SAM-binding methyltransferase superfamily. RNA methyltransferase TrmH family.

In Staphylococcus aureus (strain Mu50 / ATCC 700699), this protein is Putative TrmH family tRNA/rRNA methyltransferase.